The following is a 369-amino-acid chain: Deacetylase EF_0837 (369 aa).

Zn(2+)-binding residues include His-58, His-60, Lys-152, His-186, His-209, and Asp-270. The residue at position 152 (Lys-152) is an N6-carboxylysine.

Belongs to the metallo-dependent hydrolases superfamily. Atu3266/EF_0837 deacetylase family. Zn(2+) serves as cofactor.

In terms of biological role, esterase that can catalyze the deacetylation of acetyl-(R)-mandelate, but with very low efficiency (in vitro). In Enterococcus faecalis (strain ATCC 700802 / V583), this protein is Deacetylase EF_0837.